The sequence spans 725 residues: MSLLSKLHLILYICLLLLPLRFVNAEQLSGSGESQPVHIEADRIDGHYQQEIEATGNVRMRRGDQTLSADHVKYYQDTEDVEVKGNALLERPDDTLWGTFLQMNLQTDIGELRDPRYALKGGNGRGSGSLLLLEGENQYRIKKARYTTCPEDNHDWYILADDLEIDNEKKVGTARHASIRFKDVPILYLPWMNFSFSKERKTGFLSPIMGNTSRSGVEVSVPFYWNIAPNYDATITPRLMSRRGVMLDNEFRYIGQGLGGRLQFDYLPNDLVTDTTRYGLQFNHSQFLGSGWFGALNYNRVSDHNYFRDLGNNILFTSQVNLLQQATASYFSELGRNGMLTFSTLMQQFQTVQDPRAPIISPFKILPRFTLNAVKSNVYGLDFDLASSFTHFSHPTLPHGLRFTAFPSVALPLENSFGFIRPRVGLHYTKYDLNTPAFPGTNDKHPDRSVPIFSLDSGVVLERDMTLGGGNFIQTLEPRVFYTYIPYREQRLLPNFDSAEMDFSFAQLFMEKRFSGEDRINDANEITLAMSSRLIHSATGNERLRFSVGQRIRFSDRRVLLTSPQVTRAGSDFIAELSGSLAQHVKTDAGIQLNQNNLLIEKIRTGISYNPAPGQVINAGYRFTRDVLEQVDLSTQWPFLKRWQGFAAINYSLKNDKLLAGLLGLEYNACCWSLRLVASRFTTATQKTSTNIFVQLELNDLMRIGTNPIRVLQQSIPGYVRTDLQ.

The first 25 residues, 1 to 25, serve as a signal peptide directing secretion; the sequence is MSLLSKLHLILYICLLLLPLRFVNA.

The protein belongs to the LptD family. As to quaternary structure, component of the lipopolysaccharide transport and assembly complex. Interacts with LptE and LptA.

The protein resides in the cell outer membrane. In terms of biological role, together with LptE, is involved in the assembly of lipopolysaccharide (LPS) at the surface of the outer membrane. The sequence is that of LPS-assembly protein LptD from Nitrosomonas eutropha (strain DSM 101675 / C91 / Nm57).